A 595-amino-acid chain; its full sequence is Elongation factor 4 (595 aa).

The tr-type G domain maps to 2–184; that stretch reads KNIRNFSIIA…QIVEKIPAPK (183 aa). Residues 14 to 19 and 131 to 134 each bind GTP; these read DHGKST and NKID.

Belongs to the TRAFAC class translation factor GTPase superfamily. Classic translation factor GTPase family. LepA subfamily.

It is found in the cell inner membrane. The enzyme catalyses GTP + H2O = GDP + phosphate + H(+). Required for accurate and efficient protein synthesis under certain stress conditions. May act as a fidelity factor of the translation reaction, by catalyzing a one-codon backward translocation of tRNAs on improperly translocated ribosomes. Back-translocation proceeds from a post-translocation (POST) complex to a pre-translocation (PRE) complex, thus giving elongation factor G a second chance to translocate the tRNAs correctly. Binds to ribosomes in a GTP-dependent manner. The polypeptide is Elongation factor 4 (Ruthia magnifica subsp. Calyptogena magnifica).